Consider the following 456-residue polypeptide: Protein translocase subunit SecY (456 aa).

Residues 1–21 (MEQLKEKFEPLFSVLPQVKSP) are Cytoplasmic-facing. Residues 22–48 (GYRVPFREKLKWTGIILVLYFFLAQIP) form a helical membrane-spanning segment. Over 49–59 (LYGLSANAVDQ) the chain is Extracellular. An intramembrane region (helical) is located at residues 60–67 (FAQFRAVL). Residues 60 to 88 (FAQFRAVLAGNFGSILTLGIGPIVSASII) traverse the membrane as a discontinuously helical segment. The stretch at 68–79 (AGNFGSILTLGI) is an intramembrane region. Positions 80-88 (GPIVSASII) form an intramembrane region, helical. Topologically, residues 89–109 (LQLLVGGKILKLDLSRHEDKA) are cytoplasmic. A helical transmembrane segment spans residues 110–134 (FFQGLQKLLAIVFTFFEALIFVLTG). Topologically, residues 135–141 (SLAPSAP) are extracellular. The helical transmembrane segment at 142–166 (QFVWVLILQLTIGGILIIFLDEVVS) threads the bilayer. At 167–172 (KWGFGS) the chain is on the cytoplasmic side. The helical transmembrane segment at 173-191 (GVGLFIAAGVSQEIIVGAF) threads the bilayer. The Extracellular portion of the chain corresponds to 192–224 (NPLSAPTQPGVPAGRITGFLYLLFTGQSPDFQY). The helical transmembrane segment at 225–246 (YVLPVLALIAVFLVVVYAESMR) threads the bilayer. Topologically, residues 247-275 (VEIPISMGGGKRLSRGAVGKYPLRFIYAS) are cytoplasmic. Residues 276 to 297 (NMPVILTSALLLNVQLLANVFQ) form a helical membrane-spanning segment. Residues 298 to 334 (KLGYPILGTVSNGQAVDGLAYLLTAPRSIDALILDPF) lie on the Extracellular side of the membrane. A helical membrane pass occupies residues 335–354 (RVVFYAVVFIGLCVLFAWLW). Over 355 to 397 (VEISNIGPRHVARQLYQMGMQIPGFRSSRGQFEKILKRYIPTI) the chain is Cytoplasmic. The helical transmembrane segment at 398–416 (TILGGAFVGLLAFVADLTG) threads the bilayer. At 417–419 (SLG) the chain is on the extracellular side. A helical membrane pass occupies residues 420–434 (GGTGVLLTVGIVYRL). The Cytoplasmic portion of the chain corresponds to 435 to 456 (YEEIAQEQLMDMHPILRSFLGD).

The protein belongs to the SecY/SEC61-alpha family. Component of the Sec protein translocase complex. Heterotrimer consisting of alpha (SecY), beta (SecG) and gamma (SecE) subunits. The heterotrimers can form oligomers, although 1 heterotrimer is thought to be able to translocate proteins. Interacts with the ribosome. May interact with SecDF, and other proteins may be involved.

It localises to the cell membrane. In terms of biological role, the central subunit of the protein translocation channel SecYEG. Consists of two halves formed by TMs 1-5 and 6-10. These two domains form a lateral gate at the front which open onto the bilayer between TMs 2 and 7, and are clamped together by SecE at the back. The channel is closed by both a pore ring composed of hydrophobic SecY resides and a short helix (helix 2A) on the extracellular side of the membrane which forms a plug. The plug probably moves laterally to allow the channel to open. The ring and the pore may move independently. This is Protein translocase subunit SecY from Methanothermobacter thermautotrophicus (strain ATCC 29096 / DSM 1053 / JCM 10044 / NBRC 100330 / Delta H) (Methanobacterium thermoautotrophicum).